The sequence spans 320 residues: MSGGSSGTQQREREILLVAHPGRAEITETARRVGKIFERAGIGLRVLVDEVDSTRIEPMDGMAADEFLVPGLEVTIVQAGPDAALGCEMVLVLGGDGTFLRAAELAQAASIPVLGINLGRIGFLAETEAEHLDEALAQVVRREYRIEHRMTLDVLVRVDDEIIERGWALNEASIENRSRLGVLEVVLEVDGRPVSAFGCDGVLISTPTGSTAYAFSAGGPVVWPELEALLVVPSNAHALFARPLVTSPNSLIAVETVAGSHDGLVFCDGRRTLELPAGARVEVVRGKEPVRWIRLDSAPFADRMVRKFELPVTGWRGRKP.

Asp96 (proton acceptor) is an active-site residue. Residues 96-97 (DG), Arg101, 170-171 (NE), Asp200, and 211-216 (TAYAFS) contribute to the NAD(+) site.

This sequence belongs to the NAD kinase family. It depends on a divalent metal cation as a cofactor.

It localises to the cytoplasm. The catalysed reaction is NAD(+) + ATP = ADP + NADP(+) + H(+). Involved in the regulation of the intracellular balance of NAD and NADP, and is a key enzyme in the biosynthesis of NADP. Catalyzes specifically the phosphorylation on 2'-hydroxyl of the adenosine moiety of NAD to yield NADP. The protein is NAD kinase of Rhodococcus jostii (strain RHA1).